The following is a 1114-amino-acid chain: Lysylphosphatidylglycerol biosynthesis bifunctional protein LysX (1114 aa).

Residues 1–11 (MSASTETHHAS) show a composition bias toward basic and acidic residues. The segment at 1–28 (MSASTETHHASEAAVPTAPRPRPALGSK) is disordered. The segment at 1–618 (MSASTETHHA…GLHSDGSAPG (618 aa)) is phosphatidylglycerol lysyltransferase. Transmembrane regions (helical) follow at residues 38–58 (IAGLILGVFSVLVFLWSISPV), 77–97 (APDTSLSWALVVALLAAALAS), 101–121 (IAWWLLTIYLVLILITNVIVS), 126–146 (NVNAMVAAVVQVVLIGILVAA), 164–184 (GVLIVGLAIGTLVGWGLVELF), and 219–239 (FVNTLLGLFGAMALLAAVITL). The lysine--tRNA ligase stretch occupies residues 619 to 1114 (EGLAPTATGP…LAFPLAKPRQ (496 aa)). Positions 674–751 (VRIAGRLLRI…LSLLANEWRM (78 aa)) form a DNA-binding region, OB. Mg(2+) is bound by residues Asp1025 and Glu1032.

It in the N-terminal section; belongs to the LPG synthetase family. In the C-terminal section; belongs to the class-II aminoacyl-tRNA synthetase family. Mg(2+) serves as cofactor.

Its subcellular location is the cell membrane. The enzyme catalyses tRNA(Lys) + L-lysine + ATP = L-lysyl-tRNA(Lys) + AMP + diphosphate. It carries out the reaction L-lysyl-tRNA(Lys) + a 1,2-diacyl-sn-glycero-3-phospho-(1'-sn-glycerol) = a 1,2-diacyl-sn-glycero-3-phospho-1'-(3'-O-L-lysyl)-sn-glycerol + tRNA(Lys). Catalyzes the production of L-lysyl-tRNA(Lys)transfer and the transfer of a lysyl group from L-lysyl-tRNA(Lys) to membrane-bound phosphatidylglycerol (PG), which produces lysylphosphatidylglycerol (LPG), one of the components of the bacterial membrane with a positive net charge. LPG synthesis contributes to the resistance to cationic antimicrobial peptides (CAMPs) and likely protects M.tuberculosis against the CAMPs produced by competiting microorganisms (bacteriocins). In fact, the modification of anionic phosphatidylglycerol with positively charged L-lysine results in repulsion of the peptides. This Rhodococcus opacus (strain B4) protein is Lysylphosphatidylglycerol biosynthesis bifunctional protein LysX (lysX).